Here is a 362-residue protein sequence, read N- to C-terminus: Probable endopolygalacturonase B (362 aa).

Residues 1 to 20 (MHFLQNAFVAATMGAAPAAA) form the signal peptide. Positions 21–25 (TPLEK) are excised as a propeptide. The cysteines at positions 28 and 43 are disulfide-linked. 6 PbH1 repeats span residues 155–184 (ADHLTITDVTIDDSAGTSKGHNTDAFDIGQ), 185–206 (STYITIDGATVYNQDDCLAINS), 207–227 (GEHITFTNGYCDGGHGLSIGS), 236–257 (VNDVTISNSKVVNSQNGVRIKT), 265–287 (VENVKFEDITLSDISKYGIVVEQ), and 299–344 (TNGV…DVTG). Aspartate 199 serves as the catalytic Proton donor. Cysteine 201 and cysteine 217 are joined by a disulfide. Residue histidine 221 is part of the active site. Cysteine 327 and cysteine 332 are joined by a disulfide. N-linked (GlcNAc...) asparagine glycosylation is present at asparagine 334. Cysteine 351 and cysteine 360 form a disulfide bridge.

Belongs to the glycosyl hydrolase 28 family.

Its subcellular location is the secreted. It catalyses the reaction (1,4-alpha-D-galacturonosyl)n+m + H2O = (1,4-alpha-D-galacturonosyl)n + (1,4-alpha-D-galacturonosyl)m.. Its function is as follows. Involved in maceration and soft-rotting of plant tissue. Hydrolyzes the 1,4-alpha glycosidic bonds of de-esterified pectate in the smooth region of the plant cell wall. The chain is Probable endopolygalacturonase B (pgaB) from Aspergillus kawachii (White koji mold).